Here is a 226-residue protein sequence, read N- to C-terminus: 2-C-methyl-D-erythritol 4-phosphate cytidylyltransferase (226 aa).

This sequence belongs to the IspD/TarI cytidylyltransferase family. IspD subfamily.

It catalyses the reaction 2-C-methyl-D-erythritol 4-phosphate + CTP + H(+) = 4-CDP-2-C-methyl-D-erythritol + diphosphate. It functions in the pathway isoprenoid biosynthesis; isopentenyl diphosphate biosynthesis via DXP pathway; isopentenyl diphosphate from 1-deoxy-D-xylulose 5-phosphate: step 2/6. Catalyzes the formation of 4-diphosphocytidyl-2-C-methyl-D-erythritol from CTP and 2-C-methyl-D-erythritol 4-phosphate (MEP). This is 2-C-methyl-D-erythritol 4-phosphate cytidylyltransferase from Synechococcus sp. (strain CC9902).